Reading from the N-terminus, the 465-residue chain is Pancreatic triacylglycerol lipase (465 aa).

An N-terminal signal peptide occupies residues 1 to 16 (MLLVWSLALLLGAVAG). Intrachain disulfides connect C20–C26 and C107–C118. The Nucleophile role is filled by S169. The active-site Charge relay system is D193. Residues E204, R207, D209, and D212 each coordinate Ca(2+). C254 and C278 form a disulfide bridge. Catalysis depends on H280, which acts as the Charge relay system. 3 cysteine pairs are disulfide-bonded: C302–C313, C316–C321, and C449–C465. One can recognise a PLAT domain in the interval 355 to 465 (WRYKVSVTLS…EDVLLTLNAC (111 aa)).

It belongs to the AB hydrolase superfamily. Lipase family. In terms of assembly, forms a 1:1 stoichiometric complex with (pro)colipase/CLPS. In terms of tissue distribution, expressed in many tissues with highest expression in liver. During hibernation there is a significant increases in expression in heart, white adipose tissue (WAT), and testis; but not in pancreas.

It is found in the secreted. It catalyses the reaction a triacylglycerol + H2O = a diacylglycerol + a fatty acid + H(+). The catalysed reaction is 1,2,3-tributanoylglycerol + H2O = dibutanoylglycerol + butanoate + H(+). The enzyme catalyses 1,2,3-tri-(9Z-octadecenoyl)-glycerol + H2O = di-(9Z)-octadecenoylglycerol + (9Z)-octadecenoate + H(+). It carries out the reaction all-trans-retinyl hexadecanoate + H2O = all-trans-retinol + hexadecanoate + H(+). It catalyses the reaction 1,2-di-(9Z-octadecenoyl)-glycerol + H2O = (9Z-octadecenoyl)-glycerol + (9Z)-octadecenoate + H(+). Its activity is regulated as follows. Inhibited by bile salts, is reactivated by (pro)colipase/CLPS. Its function is as follows. Plays an important role in fat metabolism. It preferentially splits the esters of long-chain fatty acids at positions 1 and 3, producing mainly 2-monoacylglycerol and free fatty acids, and shows considerably higher activity against insoluble emulsified substrates than against soluble ones. Plays a role in hibernation as a key enzyme that shows high activity at low temperatures. When expressed in the hibernating heart it liberates fatty acids from triglycerides at temperatures as low as 0 degrees Celsius. In Ictidomys tridecemlineatus (Thirteen-lined ground squirrel), this protein is Pancreatic triacylglycerol lipase (PNLIP).